The following is a 183-amino-acid chain: MKVVSLRRIYSSEIYKLPTTRLHMDTLYYYYFVSHLAAALFVDLPITEWLGGSLSCLSGLRRFYLSTYEDPILLIPAPWKTALFSSELFFQVPFFIWVSLRLRKKARDPVLWVAILIYGVHAFTTTWCCMFELFAEKKWMIMSFYFPYLAIPLWMAIDMGGRLVKSCHAAKSGPSSTITSKSD.

The Cytoplasmic portion of the chain corresponds to 1–25 (MKVVSLRRIYSSEIYKLPTTRLHMD). The EXPERA domain maps to 24 to 156 (MDTLYYYYFV…PYLAIPLWMA (133 aa)). A helical membrane pass occupies residues 26–46 (TLYYYYFVSHLAAALFVDLPI). Topologically, residues 47–81 (TEWLGGSLSCLSGLRRFYLSTYEDPILLIPAPWKT) are lumenal. A helical membrane pass occupies residues 82-102 (ALFSSELFFQVPFFIWVSLRL). The Cytoplasmic segment spans residues 103 to 110 (RKKARDPV). The chain crosses the membrane as a helical span at residues 111 to 131 (LWVAILIYGVHAFTTTWCCMF). Topologically, residues 132–138 (ELFAEKK) are lumenal. The chain crosses the membrane as a helical span at residues 139-159 (WMIMSFYFPYLAIPLWMAIDM). Residues 160-183 (GGRLVKSCHAAKSGPSSTITSKSD) lie on the Cytoplasmic side of the membrane.

The protein belongs to the TMEM97/sigma-2 receptor family.

The protein resides in the endoplasmic reticulum membrane. Its function is as follows. Part of an import route for newly synthesized mitochondrial proteins termed the ER-SURF pathway (ER surface-mediated protein targeting), which retrieves mitochondrial precursor proteins from the ER surface and reroutes them to mitochondria for efficient mitochondrial import. Acts as a quality control factor in the ER, promoting the proteolytic degradation of nonproductive and extramitochondrial precursor proteins in the ER membrane thus removing them from the ER surface. This is Efficient mitochondria targeting-associated protein 19 (ema19) from Schizosaccharomyces pombe (strain 972 / ATCC 24843) (Fission yeast).